The chain runs to 368 residues: MNSTSTHFVPPRRVGIYEPVHQFGMWGESFKSNISNGTMNTPNHIIIPNNQKLDNNVSEDTSHGTAGTPHMFDQEASTSRHPDKIQRRLAQNREAARKSRLRKKAYVQQLETSRLKLIQLEQELDRARQQGFYVGNGIDTNSLGFSETMNPGIAAFEMEYGHWVEEQNRQICELRTVLHGHINDIELRSLVENAMKHYFELFRMKSSAAKADVFFVMSGMWRTSAERFFLWIGGFRPSDLLKVLLPHFDVLTDQQLLDVCNLKQSCQQAEDALTQGMEKLQHTLADCVAAGQLGEGSYIPQVNSAMDRLEALVSFVNQADHLRHETLQQMYRILTTRQAARGLLALGEYFQRLRALSSSWATRHREPT.

A compositionally biased stretch (polar residues) spans 53 to 65 (LDNNVSEDTSHGT). The tract at residues 53-83 (LDNNVSEDTSHGTAGTPHMFDQEASTSRHPD) is disordered. In terms of domain architecture, bZIP spans 82-145 (PDKIQRRLAQ…NGIDTNSLGF (64 aa)). 2 coiled-coil regions span residues 83–131 (DKIQ…RQQG) and 261–281 (NLKQ…EKLQ). The segment at 84-104 (KIQRRLAQNREAARKSRLRKK) is basic motif. The segment at 110 to 124 (LETSRLKLIQLEQEL) is leucine-zipper. The DOG1 domain occupies 153–363 (IAAFEMEYGH…RALSSSWATR (211 aa)). Cysteine 260 and cysteine 266 form a disulfide bridge.

The protein belongs to the bZIP family. Binds DNA as a dimer. The reduced form interacts with NPR1. Predominantly expressed in roots.

The protein localises to the nucleus. Functionally, transcriptional activator that binds specifically to the DNA sequence 5'-TGACG-3'. Recognizes ocs elements like the as-1 motif of the cauliflower mosaic virus 35S promoter. Binding to the as-1-like cis elements mediate auxin- and salicylic acid-inducible transcription. May be involved in the induction of the systemic acquired resistance (SAR) via its interaction with NPR1. Could also bind to the Hex-motif (5'-TGACGTGG-3') another cis-acting element found in plant histone promoters. This Arabidopsis thaliana (Mouse-ear cress) protein is Transcription factor TGA1 (TGA1).